Here is a 392-residue protein sequence, read N- to C-terminus: Speckle-type POZ protein-like A (392 aa).

The 131-residue stretch at 31–161 folds into the MATH domain; sequence KFSYMWTINN…DDKLTLFCEV (131 aa). The region spanning 200–267 is the BTB domain; the sequence is TDCSLYVGGQ…IYTGKAPNLE (68 aa).

Belongs to the Tdpoz family. As to quaternary structure, homodimer. Heterodimer with SPOP. Component of cullin-RING-based BCR (BTB-CUL3-RBX1) E3 ubiquitin-protein ligase complexes containing homodimeric SPOPL or the heterodimer formed by SPOP and SPOPL.

The protein localises to the nucleus. It functions in the pathway protein modification; protein ubiquitination. Component of a cullin-RING-based BCR (BTB-CUL3-RBX1) E3 ubiquitin-protein ligase complex that mediates the ubiquitination and subsequent proteasomal degradation of target proteins, but with relatively low efficiency. This is Speckle-type POZ protein-like A (spopla) from Danio rerio (Zebrafish).